The primary structure comprises 264 residues: Thymidylate synthase (264 aa).

DUMP is bound at residue arginine 21. A (6R)-5,10-methylene-5,6,7,8-tetrahydrofolate-binding site is contributed by histidine 51. Arginine 126 to arginine 127 is a dUMP binding site. The active-site Nucleophile is the cysteine 146. Residues arginine 166–aspartate 169, asparagine 177, and histidine 207–tyrosine 209 contribute to the dUMP site. Aspartate 169 contacts (6R)-5,10-methylene-5,6,7,8-tetrahydrofolate. Serine 263 provides a ligand contact to (6R)-5,10-methylene-5,6,7,8-tetrahydrofolate.

This sequence belongs to the thymidylate synthase family. Bacterial-type ThyA subfamily. Homodimer.

The protein resides in the cytoplasm. The catalysed reaction is dUMP + (6R)-5,10-methylene-5,6,7,8-tetrahydrofolate = 7,8-dihydrofolate + dTMP. The protein operates within pyrimidine metabolism; dTTP biosynthesis. Its function is as follows. Catalyzes the reductive methylation of 2'-deoxyuridine-5'-monophosphate (dUMP) to 2'-deoxythymidine-5'-monophosphate (dTMP) while utilizing 5,10-methylenetetrahydrofolate (mTHF) as the methyl donor and reductant in the reaction, yielding dihydrofolate (DHF) as a by-product. This enzymatic reaction provides an intracellular de novo source of dTMP, an essential precursor for DNA biosynthesis. The protein is Thymidylate synthase of Shouchella clausii (strain KSM-K16) (Alkalihalobacillus clausii).